Here is a 1543-residue protein sequence, read N- to C-terminus: Rho guanine nucleotide exchange factor 12 (1543 aa).

A disordered region spans residues 1 to 62; it reads MSGTQSTITD…KTKSSSEESR (62 aa). Position 2 is an N-acetylserine (S2). Residues 28–45 are compositionally biased toward basic and acidic residues; sequence SPTDKKQKVERSSSHDFD. S41 carries the post-translational modification Phosphoserine. In terms of domain architecture, PDZ spans 72 to 151; it reads CVIIQKDDNG…LTVQGRPPGS (80 aa). A coiled-coil region spans residues 194 to 262; that stretch reads VGEENNVVHN…LSKATGSAQD (69 aa). Positions 281-355 are disordered; that stretch reads AEADPGDGLC…GAPHIIGAED (75 aa). A compositionally biased stretch (low complexity) spans 293 to 312; that stretch reads DWSSGDASRPSSDSADSPKS. At S309 the chain carries Phosphoserine. The span at 313–329 shows a compositional bias: basic and acidic residues; it reads SLRERSYLEEAPERSEG. S341 is subject to Phosphoserine. The region spanning 367–558 is the RGSL domain; the sequence is GQCSCFQSIE…LMYMKYLGVK (192 aa). The disordered stretch occupies residues 574-710; it reads FLPKIKQSMK…DSTPRVPTTV (137 aa). Residues 582–592 are compositionally biased toward basic and acidic residues; that stretch reads MKKDREGEEKG. A Phosphoserine modification is found at S637. Residues 663 to 676 show a composition bias toward low complexity; the sequence is ASSMSSATSGTALS. Position 736 is a phosphothreonine (T736). The 191-residue stretch at 787-977 folds into the DH domain; the sequence is KRQEVINELF…RQILNYVNQA (191 aa). The stretch at 981–1004 forms a coiled coil; that stretch reads AENKQRLEDYQRRLDTSNLKLSEY. A PH domain is found at 1019–1132; sequence KMIHEGPLVW…WQDLICRMAA (114 aa). The segment at 1137-1158 is disordered; that stretch reads QSTKPIPLPQPPPCEGDNDEEE. A phosphoserine mark is found at S1288, S1327, and S1377. 2 disordered regions span residues 1386–1405 and 1441–1468; these read EAHS…KEEK and PVTG…GPVS. Residues 1450 to 1460 are compositionally biased toward polar residues; it reads SSHQQQHSPQN. Phosphoserine occurs at positions 1457 and 1540.

Interacts with GNA12 and GNA13, probably through the RGS-like domain, with RHOA, PLXNB1 and PLXNB2, and through its PDZ domain with IGF1R beta subunit. Interacts with GCSAM. Found in a complex with ARHGEF11 and ARHGEF12; binding to ARHGEF11 and ARHGEF12 enhances CDC42 GEF activity of PLEKHG4B, and PLEKHG4B, in turn, inhibits ARHGEF11- and ARHGEF12-mediated RHOA activation. In terms of tissue distribution, expressed in brain, predominantly in neuronal cell bodies.

It is found in the cytoplasm. The protein localises to the membrane. May play a role in the regulation of RhoA GTPase by guanine nucleotide-binding alpha-12 (GNA12) and alpha-13 (GNA13). Acts as guanine nucleotide exchange factor (GEF) for RhoA GTPase and may act as GTPase-activating protein (GAP) for GNA12 and GNA13. The polypeptide is Rho guanine nucleotide exchange factor 12 (Arhgef12) (Mus musculus (Mouse)).